Reading from the N-terminus, the 178-residue chain is Large ribosomal subunit protein uL6 (178 aa).

It belongs to the universal ribosomal protein uL6 family. Part of the 50S ribosomal subunit.

Its function is as follows. This protein binds to the 23S rRNA, and is important in its secondary structure. It is located near the subunit interface in the base of the L7/L12 stalk, and near the tRNA binding site of the peptidyltransferase center. The polypeptide is Large ribosomal subunit protein uL6 (Francisella tularensis subsp. tularensis (strain WY96-3418)).